The sequence spans 47 residues: Lysis protein for colicin E5 (47 aa).

The signal sequence occupies residues 1–19 (MKKITWIILLLLAAIILAA). The N-palmitoyl cysteine moiety is linked to residue C20. The S-diacylglycerol cysteine moiety is linked to residue C20.

Its subcellular location is the cell outer membrane. Its function is as follows. Lysis proteins are required for both colicin release and partial cell lysis. The sequence is that of Lysis protein for colicin E5 (lys) from Escherichia coli.